Reading from the N-terminus, the 148-residue chain is NADH-quinone oxidoreductase subunit A (148 aa).

3 consecutive transmembrane segments (helical) span residues 14–34 (WAFA…LVGG), 68–88 (FYLV…LYAW), and 98–118 (VGFV…VYLV).

This sequence belongs to the complex I subunit 3 family. In terms of assembly, NDH-1 is composed of 13 different subunits. Subunits NuoA, H, J, K, L, M, N constitute the membrane sector of the complex.

The protein resides in the cell inner membrane. The enzyme catalyses a quinone + NADH + 5 H(+)(in) = a quinol + NAD(+) + 4 H(+)(out). Functionally, NDH-1 shuttles electrons from NADH, via FMN and iron-sulfur (Fe-S) centers, to quinones in the respiratory chain. The immediate electron acceptor for the enzyme in this species is believed to be ubiquinone. Couples the redox reaction to proton translocation (for every two electrons transferred, four hydrogen ions are translocated across the cytoplasmic membrane), and thus conserves the redox energy in a proton gradient. This is NADH-quinone oxidoreductase subunit A from Klebsiella pneumoniae subsp. pneumoniae (strain ATCC 700721 / MGH 78578).